A 133-amino-acid polypeptide reads, in one-letter code: Secretin (133 aa).

A signal peptide spans 1–22 (MEPPLPTPMLLLLLLLLSSSAA). Residues 23 to 30 (LPAPPRTP) constitute a propeptide that is removed on maturation. Val58 is modified (valine amide). The residue at position 62 (Ser62) is a Phosphoserine. The propeptide occupies 62 to 133 (SEQDTENIPE…EWTETTRPPR (72 aa)).

Belongs to the glucagon family. In terms of tissue distribution, highly expressed in the intestine. Also expressed in the hippocampus, cerebellum and the brain stem in adult mouse brain. In the hippocampus, expressed in the dentate gyrus, the hilus and the molecular layer.

It is found in the secreted. Hormone involved in different processes, such as regulation of the pH of the duodenal content, food intake and water homeostasis. Exerts its biological effects by binding to secretin receptor (SCTR), a G-protein coupled receptor expressed in the basolateral domain of several cells. Acts as a key gastrointestinal hormone by regulating the pH of the duodenal content. Secreted by S cells of the duodenum in the crypts of Lieberkuehn and regulates the pH of the duodenum by (1) inhibiting the secretion of gastric acid from the parietal cells of the stomach and (2) stimulating the production of bicarbonate (NaHCO(3)) from the ductal cells of the pancreas. Production of bicarbonate is essential to neutralize the pH and ensure no damage is done to the small intestine by the gastric acid. In addition to regulating the pH of the duodenal content, plays a central role in diet induced thermogenesis: acts as a non-sympathetic brown fat (BAT) activator mediating prandial thermogenesis, which consequentially induces satiation. Mechanistically, secretin released by the gut after a meal binds to secretin receptor (SCTR) in brown adipocytes, activating brown fat thermogenesis by stimulating lipolysis, which is sensed in the brain and promotes satiation. Also able to stimulate lipolysis in white adipocytes. Also plays an important role in cellular osmoregulation: released into the systemic circulation in response to hyperosmolality and acts at different levels in the hypothalamus, pituitary and kidney to regulate water homeostasis. Also plays a role in the central nervous system, possibly by acting as a neuropeptide hormone: required for hippocampal synaptic function and neural progenitor cells maintenance. In Mus musculus (Mouse), this protein is Secretin.